The primary structure comprises 944 residues: Altered inheritance of mitochondria protein 3 (944 aa).

Disordered regions lie at residues 1–331, 349–805, 821–901, and 916–944; these read MGFW…PQMN, MSST…TGQD, RKTN…KSLE, and SAAD…HKLK. Basic residues predominate over residues 36–54; the sequence is ASKKHYNNSKARRERKSGK. Phosphoserine occurs at positions 57, 58, and 64. Positions 59 to 69 are enriched in acidic residues; it reads DEEYESEDEME. Positions 70–84 are enriched in basic and acidic residues; the sequence is YERKPTDIRSLKDPK. Composition is skewed to low complexity over residues 93–105 and 130–158; these read PGQK…QQQQ and QSQY…PPIY. A compositionally biased stretch (polar residues) spans 166–244; sequence GSNSNATSYQ…YVSHGSTNLG (79 aa). Composition is skewed to low complexity over residues 245 to 267 and 306 to 318; these read QSQF…VLPS and QQQQ…QQQQ. The segment covering 349 to 362 has biased composition (polar residues); that stretch reads MSSTTNMQDSNPSY. The span at 374–390 shows a compositional bias: pro residues; it reads GGQPPVPVRMQPQPPQP. Polar residues predominate over residues 461 to 470; it reads IQPNTTSSAA. Phosphoserine is present on S471. Basic and acidic residues-rich tracts occupy residues 483 to 497, 521 to 536, and 606 to 623; these read DNER…DEST, HGLD…KNAL, and EIKD…DRNV. Composition is skewed to low complexity over residues 625–640 and 664–673; these read PSLL…SQSQ and SQSSNSSDSS. A Phosphothreonine modification is found at T726. The span at 746–756 shows a compositional bias: basic and acidic residues; the sequence is DSSKDANKYEK. Residues 760–771 are compositionally biased toward polar residues; it reads PVTSSIQAQQST. T858 carries the phosphothreonine modification. The segment covering 859–876 has biased composition (pro residues); the sequence is PPRPPPSRSSPKKVPPVV. The segment covering 885–896 has biased composition (basic residues); the sequence is KKPPVVPKKKPL.

The protein belongs to the AIM3 family. As to quaternary structure, interacts with RVS167.

The protein resides in the membrane raft. The chain is Altered inheritance of mitochondria protein 3 (AIM3) from Saccharomyces cerevisiae (strain YJM789) (Baker's yeast).